The primary structure comprises 514 residues: tRNA-2-methylthio-N(6)-dimethylallyladenosine synthase (514 aa).

The segment at 1 to 21 is disordered; it reads MNEEQRKASSVDVLAERDKKA. The 119-residue stretch at 68–186 folds into the MTTase N-terminal domain; sequence RTFLIKTYGC…LPEILEEAYL (119 aa). The [4Fe-4S] cluster site is built by Cys77, Cys113, Cys147, Cys223, Cys227, and Cys230. One can recognise a Radical SAM core domain in the interval 209-440; sequence REGNIKAWVN…KKVGHYSQIA (232 aa). The TRAM domain occupies 442 to 505; sequence SKYEGQTVTV…QYSLNGSFVK (64 aa).

This sequence belongs to the methylthiotransferase family. MiaB subfamily. As to quaternary structure, monomer. [4Fe-4S] cluster is required as a cofactor.

Its subcellular location is the cytoplasm. The enzyme catalyses N(6)-dimethylallyladenosine(37) in tRNA + (sulfur carrier)-SH + AH2 + 2 S-adenosyl-L-methionine = 2-methylsulfanyl-N(6)-dimethylallyladenosine(37) in tRNA + (sulfur carrier)-H + 5'-deoxyadenosine + L-methionine + A + S-adenosyl-L-homocysteine + 2 H(+). Its function is as follows. Catalyzes the methylthiolation of N6-(dimethylallyl)adenosine (i(6)A), leading to the formation of 2-methylthio-N6-(dimethylallyl)adenosine (ms(2)i(6)A) at position 37 in tRNAs that read codons beginning with uridine. The chain is tRNA-2-methylthio-N(6)-dimethylallyladenosine synthase from Staphylococcus aureus (strain N315).